We begin with the raw amino-acid sequence, 44 residues long: Thymosin beta-4 (44 aa).

Positions 1 to 25 are enriched in basic and acidic residues; it reads MADKPDMAEIEKFDKSKLKKTETQE. The segment at 1–44 is disordered; sequence MADKPDMAEIEKFDKSKLKKTETQEKNPLPSKETIEQEKQAGES. The residue at position 2 (alanine 2) is an N-acetylalanine. The residue at position 4 (lysine 4) is an N6-acetyllysine. At lysine 12 the chain carries N6-acetyllysine; alternate. A Glycyl lysine isopeptide (Lys-Gly) (interchain with G-Cter in SUMO2); alternate cross-link involves residue lysine 12. Phosphothreonine is present on threonine 23. Residue lysine 26 is modified to N6-acetyllysine. Serine 31 carries the post-translational modification Phosphoserine. Residue lysine 32 is modified to N6-acetyllysine. Residues 33–44 are compositionally biased toward basic and acidic residues; sequence ETIEQEKQAGES. Threonine 34 carries the post-translational modification Phosphothreonine. Lysine 39 carries the N6-acetyllysine modification.

It belongs to the thymosin beta family. As to expression, originally found in thymus but it is widely distributed in many tissues.

It is found in the cytoplasm. It localises to the cytoskeleton. Plays an important role in the organization of the cytoskeleton. Binds to and sequesters actin monomers (G actin) and therefore inhibits actin polymerization. Its function is as follows. Seraspenide inhibits the entry of hematopoietic pluripotent stem cells into the S-phase. The chain is Thymosin beta-4 (TMSB4) from Oryctolagus cuniculus (Rabbit).